Here is a 152-residue protein sequence, read N- to C-terminus: MLGTALRRCAVAAAAASRAGPRGLLHPAPAPGPAAAIQSIRCYSHGSHETDEEFDARWVTYFNKPDIDAWELRKGMNTLVGYDLVPEPKIIDAALRACRRLNDFASAVRILEVVKDKAGPHKEIYPYVIQELRPTLNELGISTPEELGLDKV.

Residues 1-43 constitute a mitochondrion transit peptide; it reads MLGTALRRCAVAAAAASRAGPRGLLHPAPAPGPAAAIQSIRCY. Positions 2–22 match the SIFI-degron motif; sequence LGTALRRCAVAAAAASRAGPR. Residues K89 and K115 each carry the N6-acetyllysine modification. Position 143 is a phosphothreonine (T143).

The protein belongs to the cytochrome c oxidase subunit 5A family. As to quaternary structure, component of the cytochrome c oxidase (complex IV, CIV), a multisubunit enzyme composed of 14 subunits. The complex is composed of a catalytic core of 3 subunits MT-CO1, MT-CO2 and MT-CO3, encoded in the mitochondrial DNA, and 11 supernumerary subunits COX4I, COX5A, COX5B, COX6A, COX6B, COX6C, COX7A, COX7B, COX7C, COX8 and NDUFA4, which are encoded in the nuclear genome. The complex exists as a monomer or a dimer and forms supercomplexes (SCs) in the inner mitochondrial membrane with NADH-ubiquinone oxidoreductase (complex I, CI) and ubiquinol-cytochrome c oxidoreductase (cytochrome b-c1 complex, complex III, CIII), resulting in different assemblies (supercomplex SCI(1)III(2)IV(1) and megacomplex MCI(2)III(2)IV(2)). Interacts with AFG1L. Interacts with RAB5IF. Post-translationally, in response to mitochondrial stress, the precursor protein is ubiquitinated by the SIFI complex in the cytoplasm before mitochondrial import, leading to its degradation. Within the SIFI complex, UBR4 initiates ubiquitin chain that are further elongated or branched by KCMF1.

It is found in the mitochondrion inner membrane. It functions in the pathway energy metabolism; oxidative phosphorylation. Its function is as follows. Component of the cytochrome c oxidase, the last enzyme in the mitochondrial electron transport chain which drives oxidative phosphorylation. The respiratory chain contains 3 multisubunit complexes succinate dehydrogenase (complex II, CII), ubiquinol-cytochrome c oxidoreductase (cytochrome b-c1 complex, complex III, CIII) and cytochrome c oxidase (complex IV, CIV), that cooperate to transfer electrons derived from NADH and succinate to molecular oxygen, creating an electrochemical gradient over the inner membrane that drives transmembrane transport and the ATP synthase. Cytochrome c oxidase is the component of the respiratory chain that catalyzes the reduction of oxygen to water. Electrons originating from reduced cytochrome c in the intermembrane space (IMS) are transferred via the dinuclear copper A center (CU(A)) of subunit 2 and heme A of subunit 1 to the active site in subunit 1, a binuclear center (BNC) formed by heme A3 and copper B (CU(B)). The BNC reduces molecular oxygen to 2 water molecules using 4 electrons from cytochrome c in the IMS and 4 protons from the mitochondrial matrix. The sequence is that of Cytochrome c oxidase subunit 5A, mitochondrial (COX5A) from Eulemur fulvus fulvus (Brown lemur).